The sequence spans 87 residues: Small ribosomal subunit protein eS21B (87 aa).

Position 1 is an N-acetylmethionine (Met1).

This sequence belongs to the eukaryotic ribosomal protein eS21 family. In terms of assembly, component of the small ribosomal subunit (SSU). Mature yeast ribosomes consist of a small (40S) and a large (60S) subunit. The 40S small subunit contains 1 molecule of ribosomal RNA (18S rRNA) and 33 different proteins (encoded by 57 genes). The large 60S subunit contains 3 rRNA molecules (25S, 5.8S and 5S rRNA) and 46 different proteins (encoded by 81 genes). In terms of processing, N-terminally acetylated by acetyltransferase NatB.

It localises to the cytoplasm. Functionally, component of the ribosome, a large ribonucleoprotein complex responsible for the synthesis of proteins in the cell. The small ribosomal subunit (SSU) binds messenger RNAs (mRNAs) and translates the encoded message by selecting cognate aminoacyl-transfer RNA (tRNA) molecules. The large subunit (LSU) contains the ribosomal catalytic site termed the peptidyl transferase center (PTC), which catalyzes the formation of peptide bonds, thereby polymerizing the amino acids delivered by tRNAs into a polypeptide chain. The nascent polypeptides leave the ribosome through a tunnel in the LSU and interact with protein factors that function in enzymatic processing, targeting, and the membrane insertion of nascent chains at the exit of the ribosomal tunnel. eS21 is required for the processing of the 20S rRNA-precursor to mature 18S rRNA in a late step of the maturation of 40S ribosomal subunits. Has a physiological role leading to 18S rRNA stability. In Saccharomyces cerevisiae (strain ATCC 204508 / S288c) (Baker's yeast), this protein is Small ribosomal subunit protein eS21B.